A 413-amino-acid chain; its full sequence is Peptidase T (413 aa).

His81 is a Zn(2+) binding site. Residue Asp83 is part of the active site. Asp143 contributes to the Zn(2+) binding site. The Proton acceptor role is filled by Glu178. Zn(2+) is bound by residues Glu179, Asp201, and His383.

The protein belongs to the peptidase M20B family. Zn(2+) serves as cofactor.

The protein resides in the cytoplasm. It carries out the reaction Release of the N-terminal residue from a tripeptide.. Functionally, cleaves the N-terminal amino acid of tripeptides. This is Peptidase T from Lactococcus lactis subsp. cremoris (Streptococcus cremoris).